The following is a 384-amino-acid chain: Na(+)/H(+) antiporter NhaA (384 aa).

11 helical membrane passes run 7–27, 58–78, 94–114, 124–144, 153–173, 179–199, 204–224, 256–276, 285–305, 325–345, and 357–377; these read FYNL…LAII, LLLW…GLEI, LVPA…FIFF, GWAI…SLLG, ILLT…IALF, SLLS…LNYF, ISVF…SGVH, VVFL…FVGL, VVLG…FLSL, VYGI…IGSL, and MVKI…FLVL.

The protein belongs to the NhaA Na(+)/H(+) (TC 2.A.33) antiporter family.

The protein resides in the cell inner membrane. It catalyses the reaction Na(+)(in) + 2 H(+)(out) = Na(+)(out) + 2 H(+)(in). In terms of biological role, na(+)/H(+) antiporter that extrudes sodium in exchange for external protons. This Legionella pneumophila (strain Corby) protein is Na(+)/H(+) antiporter NhaA.